The following is a 346-amino-acid chain: UPF0421 protein OB2406 (346 aa).

4 helical membrane passes run 16-36, 55-75, 102-122, and 128-148; these read IAVL…VFAV, LIRF…IALF, LLVA…NYVM, and LFTT…LLPP.

This sequence belongs to the UPF0421 family.

It localises to the cell membrane. This chain is UPF0421 protein OB2406, found in Oceanobacillus iheyensis (strain DSM 14371 / CIP 107618 / JCM 11309 / KCTC 3954 / HTE831).